Consider the following 156-residue polypeptide: Ribosome maturation factor RimP (156 aa).

This sequence belongs to the RimP family.

It is found in the cytoplasm. Functionally, required for maturation of 30S ribosomal subunits. The sequence is that of Ribosome maturation factor RimP from Prochlorococcus marinus (strain NATL1A).